We begin with the raw amino-acid sequence, 528 residues long: GMP synthase [glutamine-hydrolyzing] (528 aa).

Residues 13–204 (SILILDFGSQ…VYKISCCAAD (192 aa)) enclose the Glutamine amidotransferase type-1 domain. Cys-90 acts as the Nucleophile in catalysis. Catalysis depends on residues His-178 and Glu-180. The GMPS ATP-PPase domain maps to 205 to 403 (WTTETYIEET…LGLPAEIIKR (199 aa)). Position 232-238 (232-238 (SGGVDSS)) interacts with ATP.

In terms of assembly, homodimer.

It carries out the reaction XMP + L-glutamine + ATP + H2O = GMP + L-glutamate + AMP + diphosphate + 2 H(+). It participates in purine metabolism; GMP biosynthesis; GMP from XMP (L-Gln route): step 1/1. Catalyzes the synthesis of GMP from XMP. In Prochlorococcus marinus (strain MIT 9215), this protein is GMP synthase [glutamine-hydrolyzing].